The chain runs to 194 residues: ATP-dependent Clp protease proteolytic subunit (194 aa).

Ser-97 acts as the Nucleophile in catalysis. His-122 is an active-site residue.

This sequence belongs to the peptidase S14 family. As to quaternary structure, fourteen ClpP subunits assemble into 2 heptameric rings which stack back to back to give a disk-like structure with a central cavity, resembling the structure of eukaryotic proteasomes.

It localises to the cytoplasm. The enzyme catalyses Hydrolysis of proteins to small peptides in the presence of ATP and magnesium. alpha-casein is the usual test substrate. In the absence of ATP, only oligopeptides shorter than five residues are hydrolyzed (such as succinyl-Leu-Tyr-|-NHMec, and Leu-Tyr-Leu-|-Tyr-Trp, in which cleavage of the -Tyr-|-Leu- and -Tyr-|-Trp bonds also occurs).. Its function is as follows. Cleaves peptides in various proteins in a process that requires ATP hydrolysis. Has a chymotrypsin-like activity. Plays a major role in the degradation of misfolded proteins. This chain is ATP-dependent Clp protease proteolytic subunit, found in Campylobacter jejuni subsp. jejuni serotype O:6 (strain 81116 / NCTC 11828).